Here is a 148-residue protein sequence, read N- to C-terminus: ASCH domain-containing ribonuclease (148 aa).

Residues 13–70 (SLWPEFAKAIVSGKKTVEFRRRIPLPALSARIWIYATRPVKSVIGFAYLEAIVQGDVN) form the ASCH domain.

Requires Mn(2+) as cofactor. The cofactor is Ni(2+).

Functionally, shows sequence-specific endoribonuclease activity towards single-stranded RNA (ssRNA), with a preference for the bond between pyrimidine and adenine nucleotides. May also have 5'-exonuclease activity. The chain is ASCH domain-containing ribonuclease from Zymomonas mobilis subsp. mobilis (strain ATCC 10988 / DSM 424 / LMG 404 / NCIMB 8938 / NRRL B-806 / ZM1).